The sequence spans 317 residues: Zinc transporter ZIP3 (317 aa).

Residues 1–3 (MSQ) are Extracellular-facing. The helical transmembrane segment at 4–24 (LLVAKVLCMVGVFFFMLLGSL) threads the bilayer. Residues 25-42 (LPVKVIEADFEKAHRSKK) lie on the Cytoplasmic side of the membrane. Residues 43–63 (VLSLCNTFGGGVFLATCFNAL) form a helical membrane-spanning segment. The Extracellular portion of the chain corresponds to 64 to 85 (LPAVRDKLQQVLSLGHISTDYP). A helical membrane pass occupies residues 86–106 (LAETLMMVGFFLTVFVEQLVL). Residues 107-172 (TFRRERPPFI…RELGRPGPLR (66 aa)) are Cytoplasmic-facing. Residues Ser125 and Ser129 each carry the phosphoserine modification. A helical transmembrane segment spans residues 173–193 (LLSLVFALSAHSVFEGLALGL). Topologically, residues 194–199 (QEEGER) are extracellular. Residues 200–220 (VVSLFVGVAVHETLVAVALGI) form a helical membrane-spanning segment. At 221 to 232 (SMARSAVPLRDA) the chain is on the cytoplasmic side. A helical transmembrane segment spans residues 233–253 (AKLAVTVSAMIPVGIGLGLGI). Residues 254–265 (ESARSVASSVAS) lie on the Extracellular side of the membrane. Residues 266 to 286 (ALLQGLAGGTFLFVTFLEILA) traverse the membrane as a helical segment. Over 287 to 294 (KELEERSE) the chain is Cytoplasmic. Residues 295-315 (QLLKVLFLVLGYAVLAGMVFL) traverse the membrane as a helical segment. The Extracellular segment spans residues 316–317 (KW).

Belongs to the ZIP transporter (TC 2.A.5) family.

The protein resides in the cell membrane. It localises to the apical cell membrane. The enzyme catalyses Zn(2+)(in) = Zn(2+)(out). In terms of biological role, transporter for the divalent cation Zn(2+). Mediates the influx of Zn(2+) into cells from extracellular space. Controls Zn(2+) accumulation into dentate gyrus granule cells in the hippocampus. Mediates Zn(2+) reuptake from the secreted milk within the alveolar lumen. In Rattus norvegicus (Rat), this protein is Zinc transporter ZIP3 (Slc39a3).